The following is a 323-amino-acid chain: NADH-ubiquinone oxidoreductase chain 1 (323 aa).

A run of 8 helical transmembrane segments spans residues 8 to 28, 75 to 95, 105 to 125, 151 to 171, 177 to 197, 234 to 254, 258 to 278, and 298 to 318; these read LINPLLYMIPILLAVAFLTLI, MFLIAPTMALALAMSIWAPLP, LGILFILALSSLAVYTILGSG, LGLILLCMIMLAGGFTYTTLM, MWLIIPGWPMAAMWYISTLAE, ANILMMNTLSYLILFLGSSFM, ELTTISLMIKSSILSMIFLWV, and FLPITLAMTLWHISLPISMLG.

It belongs to the complex I subunit 1 family. Core subunit of respiratory chain NADH dehydrogenase (Complex I) which is composed of 45 different subunits.

The protein localises to the mitochondrion inner membrane. It catalyses the reaction a ubiquinone + NADH + 5 H(+)(in) = a ubiquinol + NAD(+) + 4 H(+)(out). Core subunit of the mitochondrial membrane respiratory chain NADH dehydrogenase (Complex I) which catalyzes electron transfer from NADH through the respiratory chain, using ubiquinone as an electron acceptor. Essential for the catalytic activity and assembly of complex I. This Xenopus laevis (African clawed frog) protein is NADH-ubiquinone oxidoreductase chain 1 (mt-nd1).